We begin with the raw amino-acid sequence, 182 residues long: Probable nicotinate-nucleotide adenylyltransferase (182 aa).

It belongs to the NadD family.

The catalysed reaction is nicotinate beta-D-ribonucleotide + ATP + H(+) = deamido-NAD(+) + diphosphate. It participates in cofactor biosynthesis; NAD(+) biosynthesis; deamido-NAD(+) from nicotinate D-ribonucleotide: step 1/1. In terms of biological role, catalyzes the reversible adenylation of nicotinate mononucleotide (NaMN) to nicotinic acid adenine dinucleotide (NaAD). This chain is Probable nicotinate-nucleotide adenylyltransferase, found in Sulfurimonas denitrificans (strain ATCC 33889 / DSM 1251) (Thiomicrospira denitrificans (strain ATCC 33889 / DSM 1251)).